Consider the following 390-residue polypeptide: Succinate--CoA ligase [ADP-forming] subunit beta (390 aa).

The region spanning 9–245 (KHLLKKYNIP…TTQEDEHETM (237 aa)) is the ATP-grasp domain. Residues lysine 46, 53-55 (GRG), glutamate 99, serine 102, and glutamate 107 contribute to the ATP site. 2 residues coordinate Mg(2+): asparagine 200 and aspartate 214. Residues asparagine 265 and 322-324 (GIV) contribute to the substrate site.

Belongs to the succinate/malate CoA ligase beta subunit family. Heterotetramer of two alpha and two beta subunits. The cofactor is Mg(2+).

It carries out the reaction succinate + ATP + CoA = succinyl-CoA + ADP + phosphate. The enzyme catalyses GTP + succinate + CoA = succinyl-CoA + GDP + phosphate. Its pathway is carbohydrate metabolism; tricarboxylic acid cycle; succinate from succinyl-CoA (ligase route): step 1/1. In terms of biological role, succinyl-CoA synthetase functions in the citric acid cycle (TCA), coupling the hydrolysis of succinyl-CoA to the synthesis of either ATP or GTP and thus represents the only step of substrate-level phosphorylation in the TCA. The beta subunit provides nucleotide specificity of the enzyme and binds the substrate succinate, while the binding sites for coenzyme A and phosphate are found in the alpha subunit. This Coxiella burnetii (strain CbuK_Q154) (Coxiella burnetii (strain Q154)) protein is Succinate--CoA ligase [ADP-forming] subunit beta.